The chain runs to 72 residues: Translation initiation factor IF-1 (72 aa).

In terms of domain architecture, S1-like spans 1-72; sequence MSNDDSIEFE…TKGRITYRMK (72 aa).

Belongs to the IF-1 family. As to quaternary structure, component of the 30S ribosomal translation pre-initiation complex which assembles on the 30S ribosome in the order IF-2 and IF-3, IF-1 and N-formylmethionyl-tRNA(fMet); mRNA recruitment can occur at any time during PIC assembly.

It localises to the cytoplasm. Its function is as follows. One of the essential components for the initiation of protein synthesis. Stabilizes the binding of IF-2 and IF-3 on the 30S subunit to which N-formylmethionyl-tRNA(fMet) subsequently binds. Helps modulate mRNA selection, yielding the 30S pre-initiation complex (PIC). Upon addition of the 50S ribosomal subunit IF-1, IF-2 and IF-3 are released leaving the mature 70S translation initiation complex. This is Translation initiation factor IF-1 from Xanthomonas campestris pv. campestris (strain B100).